A 561-amino-acid chain; its full sequence is Arginine--tRNA ligase (561 aa).

A 'HIGH' region motif is present at residues Pro108–His118.

It belongs to the class-I aminoacyl-tRNA synthetase family. In terms of assembly, monomer.

It is found in the cytoplasm. The enzyme catalyses tRNA(Arg) + L-arginine + ATP = L-arginyl-tRNA(Arg) + AMP + diphosphate. This is Arginine--tRNA ligase from Haemophilus ducreyi (strain 35000HP / ATCC 700724).